Reading from the N-terminus, the 754-residue chain is Exocyst complex component EXO84A (754 aa).

Disordered stretches follow at residues Arg514 to Glu540 and Gly734 to Asn754. Over residues Gln518–Arg527 the composition is skewed to polar residues. The segment covering Gly528–Glu540 has biased composition (basic and acidic residues). Polar residues predominate over residues Thr741–Asn754.

The protein belongs to the EXO84 family. In terms of assembly, the exocyst complex is composed of SEC3, SEC5, SEC6, SEC8, SEC10, EXO70A1 and EXO84.

Functionally, component of the exocyst complex involved in the docking of exocytic vesicles with fusion sites on the plasma membrane during regulated or polarized secretion. Involved in polarized cell growth and organ morphogenesis. During cytokinesis, involved in cell plate initiation, cell plate maturation and formation of new primary cell wall. This is Exocyst complex component EXO84A (EXO84A) from Arabidopsis thaliana (Mouse-ear cress).